The sequence spans 287 residues: Toxin zeta (287 aa).

40–47 serves as a coordination point for ATP; it reads GQPGSGKT. Residue N66 coordinates substrate. D67 functions as the Proton acceptor in the catalytic mechanism. E100, T118, R120, and T128 together coordinate substrate. The interval 267 to 287 is disordered; sequence KLESLQPPTPPIPKTPKLPGI. Over residues 273 to 287 the composition is skewed to pro residues; the sequence is PPTPPIPKTPKLPGI.

Belongs to the zeta toxin family. In the presence of the epsilon antitoxin forms an inactive PezA(2)PezT(2) heterotetramer. The heterotetramer is still able to bind the UNAG substrate.

It catalyses the reaction UDP-N-acetyl-alpha-D-glucosamine + ATP = UDP-N-acetyl-alpha-D-glucosamine 3'-phosphate + ADP + H(+). Its function is as follows. Toxic component of a type II toxin-antitoxin (TA) system. Phosphorylates UDP-N-acetyl-D-glucosamine (UNAG) on the 3'-hydroxyl group of the N-acetyl-D-glucosamine moiety, yielding UNAG-3P. UNAG-3P inhibits MurA, the first committed step in cell wall synthesis, which is then blocked. Phosphorylation is inhibited by cognate epsilon antitoxin. Part of a postsegregational killing (PSK) system involved in the killing of plasmid-free cells. The zeta toxin induces programmed cell death. This chain is Toxin zeta, found in Streptococcus pyogenes.